Reading from the N-terminus, the 357-residue chain is N-acetyl-gamma-glutamyl-phosphate reductase (357 aa).

Cys160 is an active-site residue.

It belongs to the NAGSA dehydrogenase family. Type 1 subfamily.

The protein resides in the cytoplasm. It catalyses the reaction N-acetyl-L-glutamate 5-semialdehyde + phosphate + NADP(+) = N-acetyl-L-glutamyl 5-phosphate + NADPH + H(+). Its pathway is amino-acid biosynthesis; L-arginine biosynthesis; N(2)-acetyl-L-ornithine from L-glutamate: step 3/4. In terms of biological role, catalyzes the NADPH-dependent reduction of N-acetyl-5-glutamyl phosphate to yield N-acetyl-L-glutamate 5-semialdehyde. This chain is N-acetyl-gamma-glutamyl-phosphate reductase, found in Parasynechococcus marenigrum (strain WH8102).